The sequence spans 207 residues: Protein dct-5 (207 aa).

A helical membrane pass occupies residues 13–33 (LNFILSIMNSYLFVLIVSIGF).

Its subcellular location is the membrane. Its function is as follows. Acts downstream of daf-16/foxo to suppress tumors induced by disruption of gld-1. Potentially a direct target of daf-15/foxo. The sequence is that of Protein dct-5 (dct-5) from Caenorhabditis elegans.